The sequence spans 313 residues: Protoheme IX farnesyltransferase (313 aa).

Transmembrane regions (helical) follow at residues 33 to 53 (IALM…PVML), 59 to 79 (MPSW…AGSA), 107 to 127 (VEPA…TLMF), 129 to 149 (LLVN…YVFV), 162 to 182 (IVIG…AVTG), 188 to 208 (AVLL…ALAI), 212 to 232 (DDYA…EVVT), 252 to 272 (VADI…WFVA), and 292 to 312 (LFHM…AAAL).

It belongs to the UbiA prenyltransferase family. Protoheme IX farnesyltransferase subfamily.

The protein resides in the cell membrane. It catalyses the reaction heme b + (2E,6E)-farnesyl diphosphate + H2O = Fe(II)-heme o + diphosphate. Its pathway is porphyrin-containing compound metabolism; heme O biosynthesis; heme O from protoheme: step 1/1. Its function is as follows. Converts heme B (protoheme IX) to heme O by substitution of the vinyl group on carbon 2 of heme B porphyrin ring with a hydroxyethyl farnesyl side group. The sequence is that of Protoheme IX farnesyltransferase from Parafrankia sp. (strain EAN1pec).